A 276-amino-acid chain; its full sequence is MEPYVVDNLNRDDCVMIVWSGEVQDDVMCDLKAAVSTHVKKLHFENLENFTNSSTISSQFHGCSSVILCGWPNPININTLERGLLSNLSSCLQPGGRLICRESTMEDWNSFRKNLTLSGYVNPYQLPGGNHLIFIAFVPSNYTRGSSIKLPWAHSDIEAAWENVDNETSYDVDKNLINTNSLLQKSDYVTPLAACGQEFAKNSIGKRKRACKNCTCGLAEIEATEVEDKSVVSISSCGNCYLGDAFRCSTCPYRGLPPFKPGDRILIPDDVLKADL.

The segment at 1-152 (MEPYVVDNLN…TRGSSIKLPW (152 aa)) is N-terminal SAM-like domain. A linker region spans residues 152–189 (WAHSDIEAAWENVDNETSYDVDKNLINTNSLLQKSDYV). Residues Cys195, Cys211, Cys214, and Cys216 each contribute to the [2Fe-2S] cluster site. Residues 195 to 216 (CGQEFAKNSIGKRKRACKNCTC) are fe-S binding site A. [4Fe-4S] cluster contacts are provided by Cys237, Cys240, Cys248, and Cys251. 2 short sequence motifs (cx2C motif) span residues 237-240 (CGNC) and 248-251 (CSTC). The interval 237-251 (CGNCYLGDAFRCSTC) is fe-S binding site B.

Belongs to the anamorsin family. In terms of assembly, monomer. [2Fe-2S] cluster is required as a cofactor. The cofactor is [4Fe-4S] cluster.

The protein localises to the cytoplasm. Its subcellular location is the mitochondrion intermembrane space. Component of the cytosolic iron-sulfur (Fe-S) protein assembly (CIA) machinery. Required for the maturation of extramitochondrial Fe-S proteins. Part of an electron transfer chain functioning in an early step of cytosolic Fe-S biogenesis, facilitating the de novo assembly of a [4Fe-4S] cluster on the cytosolic Fe-S scaffold complex. Electrons are transferred from NADPH via a FAD- and FMN-containing diflavin oxidoreductase. Together with the diflavin oxidoreductase, also required for the assembly of the diferric tyrosyl radical cofactor of ribonucleotide reductase (RNR), probably by providing electrons for reduction during radical cofactor maturation in the catalytic small subunit. In Schistosoma japonicum (Blood fluke), this protein is Anamorsin homolog.